A 228-amino-acid polypeptide reads, in one-letter code: NADH-quinone oxidoreductase subunit C (228 aa).

This sequence belongs to the complex I 30 kDa subunit family. As to quaternary structure, NDH-1 is composed of 14 different subunits. Subunits NuoB, C, D, E, F, and G constitute the peripheral sector of the complex.

Its subcellular location is the cell membrane. The catalysed reaction is a quinone + NADH + 5 H(+)(in) = a quinol + NAD(+) + 4 H(+)(out). NDH-1 shuttles electrons from NADH, via FMN and iron-sulfur (Fe-S) centers, to quinones in the respiratory chain. The immediate electron acceptor for the enzyme in this species is believed to be a menaquinone. Couples the redox reaction to proton translocation (for every two electrons transferred, four hydrogen ions are translocated across the cytoplasmic membrane), and thus conserves the redox energy in a proton gradient. This is NADH-quinone oxidoreductase subunit C from Mycobacteroides abscessus (strain ATCC 19977 / DSM 44196 / CCUG 20993 / CIP 104536 / JCM 13569 / NCTC 13031 / TMC 1543 / L948) (Mycobacterium abscessus).